We begin with the raw amino-acid sequence, 221 residues long: Small ribosomal subunit protein uS3 (221 aa).

In terms of domain architecture, KH type-2 spans 39–107 (IRNYIKEKLY…TVILNIIEVK (69 aa)).

Belongs to the universal ribosomal protein uS3 family. In terms of assembly, part of the 30S ribosomal subunit. Forms a tight complex with proteins S10 and S14.

Binds the lower part of the 30S subunit head. Binds mRNA in the 70S ribosome, positioning it for translation. This Caldanaerobacter subterraneus subsp. tengcongensis (strain DSM 15242 / JCM 11007 / NBRC 100824 / MB4) (Thermoanaerobacter tengcongensis) protein is Small ribosomal subunit protein uS3.